We begin with the raw amino-acid sequence, 493 residues long: 3-octaprenyl-4-hydroxybenzoate carboxy-lyase (493 aa).

A Mn(2+)-binding site is contributed by asparagine 172. Prenylated FMN contacts are provided by residues 175 to 177 (IYR), 189 to 191 (RWL), and 194 to 195 (RG). Glutamate 238 is a binding site for Mn(2+). Catalysis depends on aspartate 287, which acts as the Proton donor.

The protein belongs to the UbiD family. In terms of assembly, homohexamer. Prenylated FMN is required as a cofactor. The cofactor is Mn(2+).

The protein resides in the cell membrane. The enzyme catalyses a 4-hydroxy-3-(all-trans-polyprenyl)benzoate + H(+) = a 2-(all-trans-polyprenyl)phenol + CO2. Its pathway is cofactor biosynthesis; ubiquinone biosynthesis. Catalyzes the decarboxylation of 3-octaprenyl-4-hydroxy benzoate to 2-octaprenylphenol, an intermediate step in ubiquinone biosynthesis. This chain is 3-octaprenyl-4-hydroxybenzoate carboxy-lyase, found in Shewanella halifaxensis (strain HAW-EB4).